The chain runs to 338 residues: Ketol-acid reductoisomerase (NADP(+)) (338 aa).

Residues 1–181 enclose the KARI N-terminal Rossmann domain; the sequence is MNVFYDKDAD…GGGRAGIIET (181 aa). NADP(+) is bound by residues 24 to 27, R47, and S52; that span reads YGSQ. H107 is an active-site residue. G133 serves as a coordination point for NADP(+). Residues 182-327 form the KARI C-terminal knotted domain; it reads NFREETETDL…AKLRAMMPWI (146 aa). D190, E194, E226, and E230 together coordinate Mg(2+). S251 contacts substrate.

This sequence belongs to the ketol-acid reductoisomerase family. Mg(2+) is required as a cofactor.

The catalysed reaction is (2R)-2,3-dihydroxy-3-methylbutanoate + NADP(+) = (2S)-2-acetolactate + NADPH + H(+). It carries out the reaction (2R,3R)-2,3-dihydroxy-3-methylpentanoate + NADP(+) = (S)-2-ethyl-2-hydroxy-3-oxobutanoate + NADPH + H(+). The protein operates within amino-acid biosynthesis; L-isoleucine biosynthesis; L-isoleucine from 2-oxobutanoate: step 2/4. Its pathway is amino-acid biosynthesis; L-valine biosynthesis; L-valine from pyruvate: step 2/4. Functionally, involved in the biosynthesis of branched-chain amino acids (BCAA). Catalyzes an alkyl-migration followed by a ketol-acid reduction of (S)-2-acetolactate (S2AL) to yield (R)-2,3-dihydroxy-isovalerate. In the isomerase reaction, S2AL is rearranged via a Mg-dependent methyl migration to produce 3-hydroxy-3-methyl-2-ketobutyrate (HMKB). In the reductase reaction, this 2-ketoacid undergoes a metal-dependent reduction by NADPH to yield (R)-2,3-dihydroxy-isovalerate. In Burkholderia lata (strain ATCC 17760 / DSM 23089 / LMG 22485 / NCIMB 9086 / R18194 / 383), this protein is Ketol-acid reductoisomerase (NADP(+)).